Consider the following 577-residue polypeptide: Heavy metal-associated isoprenylated plant protein 34 (577 aa).

The HMA domain occupies 9–72 (LQTCVLKVNV…KLSKSGKHAE (64 aa)). The a metal cation site is built by C20 and C23. The span at 77–87 (GGGGGGGGGKG) shows a compositional bias: gly residues. 2 disordered regions span residues 77–136 (GGGG…QPMQ) and 150–451 (AAHG…GPGG). The span at 97 to 106 (NLNMGGNNKP) shows a compositional bias: low complexity. Positions 118 to 129 (KAGGGGGGGQNH) are enriched in gly residues. Residues 168 to 177 (KDQKKSVKFA) are compositionally biased toward basic and acidic residues. Acidic residues predominate over residues 178-213 (DDEDDEFSEDDYDDEDFSEDDYDDDEFDDDEDDDDE). Residues 227–244 (HMPPNKMMMPNKMMPQMG) show a composition bias toward low complexity. 2 stretches are compositionally biased toward gly residues: residues 245–254 (GHHGNGGGPK) and 266–281 (FKGG…GGGF). 2 stretches are compositionally biased toward basic and acidic residues: residues 294–326 (KNGK…KTDA) and 344–358 (NGDE…DGHG). Gly residues-rich tracts occupy residues 379-392 (KKGG…GHGG) and 420-451 (GIGG…GPGG). At C574 the chain carries Cysteine methyl ester. A lipid anchor (S-farnesyl cysteine) is attached at C574. Residues 575 to 577 (SIM) constitute a propeptide, removed in mature form.

The protein belongs to the HIPP family.

Its function is as follows. Heavy-metal-binding protein. The protein is Heavy metal-associated isoprenylated plant protein 34 of Arabidopsis thaliana (Mouse-ear cress).